Consider the following 398-residue polypeptide: Phosphoglycerate kinase (398 aa).

Substrate is bound by residues 24-26, Arg-40, 63-66, Arg-122, and Arg-155; these read DFN and HMGR. ATP-binding positions include Lys-206, Gly-294, Glu-325, and 354 to 357; that span reads GGDS.

Belongs to the phosphoglycerate kinase family. Monomer.

It localises to the cytoplasm. It catalyses the reaction (2R)-3-phosphoglycerate + ATP = (2R)-3-phospho-glyceroyl phosphate + ADP. It functions in the pathway carbohydrate degradation; glycolysis; pyruvate from D-glyceraldehyde 3-phosphate: step 2/5. The polypeptide is Phosphoglycerate kinase (Picosynechococcus sp. (strain ATCC 27264 / PCC 7002 / PR-6) (Agmenellum quadruplicatum)).